An 838-amino-acid chain; its full sequence is Protein translocase subunit SecA 1 (838 aa).

ATP contacts are provided by residues Q85, 103 to 107 (GEGKT), and D493. The Zn(2+) site is built by C823, C825, C834, and H835.

This sequence belongs to the SecA family. As to quaternary structure, monomer and homodimer. Part of the essential Sec protein translocation apparatus which comprises SecA, SecYEG and auxiliary proteins SecDF. Other proteins may also be involved. The cofactor is Zn(2+).

Its subcellular location is the cell membrane. The protein localises to the cytoplasm. The catalysed reaction is ATP + H2O + cellular proteinSide 1 = ADP + phosphate + cellular proteinSide 2.. Its function is as follows. Part of the Sec protein translocase complex. Interacts with the SecYEG preprotein conducting channel. Has a central role in coupling the hydrolysis of ATP to the transfer of proteins into and across the cell membrane, serving as an ATP-driven molecular motor driving the stepwise translocation of polypeptide chains across the membrane. The chain is Protein translocase subunit SecA 1 from Streptococcus gordonii.